A 480-amino-acid polypeptide reads, in one-letter code: MTVTKMSWRPQYRCSKFRNVYGKVASRENCYDCIPITKNVHDNHFCAVNPKFLAIVTETAGGGSFLVIPLQQTGRIEPNYPKVCGHQGTVLDIKWNPFIENIIASCSEDTSVRIWEIPDGGLKRNMSEAVLELYGHSRRVGLIEWHPTAINILFSAGYDYKILIWNLDIGEAVKMIDCHRDVILCMSFNTDGSLLATTCKDKKLRVLEPRSGRVLQETACKTHKVTRVVFLGDMKRLFTTGVSKWNTRQMALWDQEDLSMPVTEEEIDGLSGLLFPFYDADTHMLYLAGKGDGNIRYYEITAEKPYLTYLMEFRSPAPQKGLGVMPKHGLDVSACEIFRFYKLITLKNQIEPISMIVPRRSENYQEDIYPMTSGTEPALRPEEWLRGVNKGPVLMSLKEGYRKENKAIFIAPVKEKKSLVVNGIDLLENVPPRTENELLRMFFRQQEEIRRLKEQLSQRDLLVRQLELELKNLRNSPKDS.

WD repeat units follow at residues 85–125 (GHQG…LKRN), 135–177 (GHSR…KMID), 179–217 (HRDV…VLQE), 220–263 (CKTH…MPVT), and 265–308 (EEID…PYLT). Residues 436–475 (NELLRMFFRQQEEIRRLKEQLSQRDLLVRQLELELKNLRN) adopt a coiled-coil conformation.

This sequence belongs to the WD repeat coronin family.

It localises to the cytoplasm. Its subcellular location is the cytoskeleton. In terms of biological role, may play a role in the reorganization of neuronal actin structure. The protein is Coronin-2B (coro2b) of Xenopus tropicalis (Western clawed frog).